The following is a 129-amino-acid chain: Fluoride-specific ion channel FluC 2 (129 aa).

A run of 4 helical transmembrane segments spans residues 9–29, 37–57, 74–94, and 100–120; these read LGTL…RYLL, GTIL…YYVI, MVGA…LSTF, and YLLI…ILGI. Residues Gly76 and Thr79 each coordinate Na(+).

The protein belongs to the fluoride channel Fluc/FEX (TC 1.A.43) family.

Its subcellular location is the cell membrane. It catalyses the reaction fluoride(in) = fluoride(out). Na(+) is not transported, but it plays an essential structural role and its presence is essential for fluoride channel function. Functionally, fluoride-specific ion channel. Important for reducing fluoride concentration in the cell, thus reducing its toxicity. This chain is Fluoride-specific ion channel FluC 2, found in Ligilactobacillus salivarius (strain UCC118) (Lactobacillus salivarius).